The primary structure comprises 300 residues: tRNA dimethylallyltransferase (300 aa).

Residue 18-25 (GPTATGKS) participates in ATP binding. 20–25 (TATGKS) provides a ligand contact to substrate. Residues 43–46 (DSRQ) form an interaction with substrate tRNA region.

This sequence belongs to the IPP transferase family. Monomer. Requires Mg(2+) as cofactor.

It carries out the reaction adenosine(37) in tRNA + dimethylallyl diphosphate = N(6)-dimethylallyladenosine(37) in tRNA + diphosphate. Its function is as follows. Catalyzes the transfer of a dimethylallyl group onto the adenine at position 37 in tRNAs that read codons beginning with uridine, leading to the formation of N6-(dimethylallyl)adenosine (i(6)A). The chain is tRNA dimethylallyltransferase from Cyanothece sp. (strain PCC 7425 / ATCC 29141).